Here is a 156-residue protein sequence, read N- to C-terminus: Deoxyuridine 5'-triphosphate nucleotidohydrolase (156 aa).

Substrate-binding positions include 76 to 78, Asn-89, 93 to 95, and Lys-103; these read RSG and TVD.

It belongs to the dUTPase family. It depends on Mg(2+) as a cofactor.

The catalysed reaction is dUTP + H2O = dUMP + diphosphate + H(+). It participates in pyrimidine metabolism; dUMP biosynthesis; dUMP from dCTP (dUTP route): step 2/2. This enzyme is involved in nucleotide metabolism: it produces dUMP, the immediate precursor of thymidine nucleotides and it decreases the intracellular concentration of dUTP so that uracil cannot be incorporated into DNA. This is Deoxyuridine 5'-triphosphate nucleotidohydrolase from Agrobacterium fabrum (strain C58 / ATCC 33970) (Agrobacterium tumefaciens (strain C58)).